A 329-amino-acid polypeptide reads, in one-letter code: Deoxynucleotidyltransferase terminal-interacting protein 1 (329 aa).

Disordered stretches follow at residues 1–22 and 147–178; these read MGATGDAEQPRGPSGAERGGLE and KRGRQAEEECAHRGSPLPKKRKGRPPGHILSS. Positions 56 to 147 are important for dimerization; that stretch reads MTTSFTDPAI…RLTHELPGIK (92 aa). The segment covering 147–158 has biased composition (basic and acidic residues); sequence KRGRQAEEECAH. Positions 159–173 form a DNA-binding region, a.T hook; the sequence is RGSPLPKKRKGRPPG. Residue Ser161 is modified to Phosphoserine. The Nuclear localization signal signature appears at 164–170; sequence PKKRKGR. Positions 197 to 316 are important for DNA and nucleosome binding; it reads REGPKWDPAR…MRKYMETLRT (120 aa). Residues 216–237 constitute a DNA-binding region (H-T-H motif); that stretch reads GSRANKALGMGGTRGRIYIKHP.

Monomer and homodimer. A minor proportion may form homotrimers. Interacts with ZNF541. Interacts with the terminal deoxynucleotidyltransferase DNTT. Interacts with TRERF1. Identified in a histone deacetylase complex that contains DNTTIP1, HDAC1 and MIDEAS; this complex assembles into a tetramer that contains four copies of each protein chain. Component of a histone deacetylase complex containing DNTTIP1, ZNF541, HDAC1 and HDAC2. Identified in a complex with KCTD19, HDAC1, HDAC2 and ZNF541.

It is found in the nucleus. Functionally, increases DNTT terminal deoxynucleotidyltransferase activity (in vitro). Also acts as a transcriptional regulator, binding to the consensus sequence 5'-GNTGCATG-3' following an AT-tract. Associates with RAB20 promoter and positively regulates its transcription. Binds DNA and nucleosomes; may recruit HDAC1 complexes to nucleosomes or naked DNA. The polypeptide is Deoxynucleotidyltransferase terminal-interacting protein 1 (DNTTIP1) (Homo sapiens (Human)).